We begin with the raw amino-acid sequence, 46 residues long: Cytochrome b559 subunit beta (46 aa).

The chain crosses the membrane as a helical span at residues 21-37 (WLALHTLGIPTVFFLGA). Position 25 (H25) interacts with heme.

The protein belongs to the PsbE/PsbF family. In terms of assembly, heterodimer of an alpha subunit and a beta subunit. PSII is composed of 1 copy each of membrane proteins PsbA, PsbB, PsbC, PsbD, PsbE, PsbF, PsbH, PsbI, PsbJ, PsbK, PsbL, PsbM, PsbT, PsbX, PsbY, PsbZ, Psb30/Ycf12, peripheral proteins PsbO, CyanoQ (PsbQ), PsbU, PsbV and a large number of cofactors. It forms dimeric complexes. It depends on heme b as a cofactor.

The protein localises to the cellular thylakoid membrane. In terms of biological role, this b-type cytochrome is tightly associated with the reaction center of photosystem II (PSII). PSII is a light-driven water:plastoquinone oxidoreductase that uses light energy to abstract electrons from H(2)O, generating O(2) and a proton gradient subsequently used for ATP formation. It consists of a core antenna complex that captures photons, and an electron transfer chain that converts photonic excitation into a charge separation. The chain is Cytochrome b559 subunit beta from Synechococcus sp. (strain CC9605).